Reading from the N-terminus, the 1081-residue chain is Probable sucrose-phosphate synthase 2 (1081 aa).

Disordered stretches follow at residues Glu116–Asn152, Glu239–Gly267, and Ile760–Pro780. Acidic residues predominate over residues Glu256 to Gly267.

The protein belongs to the glycosyltransferase 1 family. In terms of assembly, homodimer or homotetramer.

It catalyses the reaction beta-D-fructose 6-phosphate + UDP-alpha-D-glucose = sucrose 6(F)-phosphate + UDP + H(+). The protein operates within glycan biosynthesis; sucrose biosynthesis; sucrose from D-fructose 6-phosphate and UDP-alpha-D-glucose: step 1/2. Activity is regulated by phosphorylation and moderated by concentration of metabolites and light. Its function is as follows. Plays a role in photosynthetic sucrose synthesis by catalyzing the rate-limiting step of sucrose biosynthesis from UDP-glucose and fructose- 6-phosphate. Involved in the regulation of carbon partitioning in the leaves of plants. May regulate the synthesis of sucrose and therefore play a major role as a limiting factor in the export of photoassimilates out of the leaf. Plays a role for sucrose availability that is essential for plant growth and fiber elongation. The sequence is that of Probable sucrose-phosphate synthase 2 (SPS2) from Craterostigma plantagineum (Blue gem).